Here is an 819-residue protein sequence, read N- to C-terminus: Mitosis inhibitor protein kinase SWE1 (819 aa).

Residue Ser-36 is modified to Phosphoserine; by CDC5. Thr-45 is subject to Phosphothreonine; by CDC28. Residues Ser-56 and Ser-63 each carry the phosphoserine; by CDC28 modification. A Phosphoserine modification is found at Ser-70. Thr-74 is modified (phosphothreonine; by CDC28). The tract at residues 86-105 (KIEEEEEEEEEGKDEESVDS) is disordered. The segment covering 88–102 (EEEEEEEEEGKDEES) has biased composition (acidic residues). Position 102 is a phosphoserine; by CDC5 (Ser-102). Ser-105 bears the Phosphoserine; by CDC28 mark. Ser-111 is subject to Phosphoserine; by CDC5, CDC28 and CLA4. The disordered stretch occupies residues 117 to 168 (ESVTTPITKRSAEKTNSPISLKQWNQRWFPKNDARTENTSSSSSYSVAKPNQ). Ser-118 carries the post-translational modification Phosphoserine; by CDC5. Polar residues predominate over residues 118–142 (SVTTPITKRSAEKTNSPISLKQWNQ). Phosphothreonine; by CDC28 occurs at positions 121 and 124. A Phosphoserine; by CDC28 modification is found at Ser-127. Thr-131 carries the phosphothreonine; by CDC5 modification. Ser-133 is modified (phosphoserine; by CDC28). Ser-136 is modified (phosphoserine; by CDC28 and CLA4). Ser-156 and Ser-169 each carry phosphoserine; by CDC5. Thr-196 carries the phosphothreonine; by CDC28 modification. Ser-201 is modified (phosphoserine; by CDC28). Residues Ser-225 and Ser-254 each carry the phosphoserine; by CDC5 modification. Ser-262 bears the Phosphoserine mark. Residues Ser-263 and Ser-266 each carry the phosphoserine; by CDC28 modification. Positions 278–297 (NQTNILSPTNSLVTNSSPQT) are disordered. Thr-280 bears the Phosphothreonine; by CDC5 mark. Residues Ser-284 and Ser-294 each carry the phosphoserine modification. The residue at position 312 (Ser-312) is a Phosphoserine; by CLA4. Residues 341–395 (PIIISSHHSTRKNPQPYQFRGRYDNDTDEEISTPTRRKSIIGATSQTHRESRPLS) are disordered. Ser-345 carries the post-translational modification Phosphoserine. Thr-367 and Thr-373 each carry phosphothreonine; by CDC28. Residue Ser-379 is modified to Phosphoserine; by CDC5 and CLA4. A Phosphothreonine; by CDC28 modification is found at Thr-384. 2 positions are modified to phosphoserine; by CDC5 and CLA4: Ser-395 and Ser-438. One can recognise a Protein kinase domain in the interval 444-794 (FTNVHSIGKG…NQILQTEECL (351 aa)). Residues 450-458 (IGKGQFSTV) and Lys-473 contribute to the ATP site. The Proton acceptor role is filled by Asp-579. Asn-584 and Asp-597 together coordinate Mg(2+). At Ser-610 the chain carries Phosphoserine; by CDC5. Thr-629 carries the phosphothreonine; by CDC5 modification. Phosphothreonine; by CDC5 and CLA4 is present on Thr-688. Phosphothreonine is present on Thr-692. A compositionally biased stretch (polar residues) spans 707–716 (SNNAGTSTVH). A disordered region spans residues 707-736 (SNNAGTSTVHNNSNINNPNMNNGNDNNNVN). Over residues 717 to 736 (NNSNINNPNMNNGNDNNNVN) the composition is skewed to low complexity. Residue Lys-741 forms a Glycyl lysine isopeptide (Lys-Gly) (interchain with G-Cter in ubiquitin) linkage.

Belongs to the protein kinase superfamily. Ser/Thr protein kinase family. WEE1 subfamily. As to quaternary structure, interacts with CLB2-CDC28. Partial hyperphosphorylation of SWE1 by CLB2-CDC28 stabilizes the ternary complex of SWE1 and CLB2-CDC28 and stimulates kinase activity of SWE1 in a positive feedback loop, maintaining CLB2-CDC28 in the tyrosine-phosphorylated state. Fully hyperphosphorylated SWE1 dissociates from CLB2-CDC28. Interacts with HSL7, KCC4 and MET30. Post-translationally, ubiquitinated by the SCF(MET30) complex, leading to its degradation by the proteasome. Phosphorylated progressively by CLA4, CLB2-CDC28 and CDC5. CLA4-dependent phosphorylation occurs in late S phase, followed by phosphorylation by CLB2-CDC28 in early G2, when the levels of mitotic CLB2 increases. This phosphorylation is critical for triggering subsequent SWE1-CDC5 interaction and CDC5-dependent phosphorylation. The resulting cumulative hyperphosphorylation down-regulates SWE1 by targeting it for ubiquitin-mediated degradation. This stepwise phosphorylation is thought to be a mechanism to integrate the different checkpoint requirements before entry into mitosis.

The protein localises to the bud neck. It is found in the nucleus. The enzyme catalyses L-seryl-[protein] + ATP = O-phospho-L-seryl-[protein] + ADP + H(+). The catalysed reaction is L-threonyl-[protein] + ATP = O-phospho-L-threonyl-[protein] + ADP + H(+). In terms of biological role, protein kinase that acts as a negative regulator of entry into mitosis (G2 to M transition) by phosphorylating and inhibiting the mitosis-promoting cyclin B-bound CDC28 at 'Tyr-19'. SWE1-mediated inhibition of CDC28 acts in a cell size or morphogenesis checkpoint to delay mitosis in response to defects in growth, actin organization or bud formation. Inhibits the activity of B-type cyclins in replication initiation strongly for CLB2, moderately for CLB3 and CLB4, and there is no apparent inhibition for CLB5 and CLB6, correlating with the normal expression timing of those cyclins. Hyperphosphorylation and degradation of SWE1 when all checkpoint requirement are met releases CLB2-CDC28 from inhibition and allows for progression through the cell cycle. SWE1-dependent CDC28 phosphorylation is also required for pachytene arrest upon activation of the recombination checkpoint during meiosis. Also involved in the regulation of nitrogen starvation- and short chain alcohol-induced filamentous growth, or filamentous differentiation in response to slowed DNA synthesis. Can act both on serines and on tyrosines. The chain is Mitosis inhibitor protein kinase SWE1 (SWE1) from Saccharomyces cerevisiae (strain ATCC 204508 / S288c) (Baker's yeast).